The sequence spans 286 residues: D-tagatose-1,6-bisphosphate aldolase subunit KbaY (286 aa).

D82 acts as the Proton donor in catalysis. Zn(2+) contacts are provided by H83 and H180. Position 181 (G181) interacts with dihydroxyacetone phosphate. H208 lines the Zn(2+) pocket. Residues 209–211 and 230–233 contribute to the dihydroxyacetone phosphate site; these read GAS and NVAT.

It belongs to the class II fructose-bisphosphate aldolase family. TagBP aldolase KbaY subfamily. In terms of assembly, homotetramer. Forms a complex with KbaZ. Requires Zn(2+) as cofactor.

The catalysed reaction is D-tagatofuranose 1,6-bisphosphate = D-glyceraldehyde 3-phosphate + dihydroxyacetone phosphate. It participates in carbohydrate metabolism; D-tagatose 6-phosphate degradation; D-glyceraldehyde 3-phosphate and glycerone phosphate from D-tagatose 6-phosphate: step 2/2. Functionally, catalytic subunit of the tagatose-1,6-bisphosphate aldolase KbaYZ, which catalyzes the reversible aldol condensation of dihydroxyacetone phosphate (DHAP or glycerone-phosphate) with glyceraldehyde 3-phosphate (G3P) to produce tagatose 1,6-bisphosphate (TBP). Requires KbaZ subunit for full activity and stability. The polypeptide is D-tagatose-1,6-bisphosphate aldolase subunit KbaY (Escherichia coli O17:K52:H18 (strain UMN026 / ExPEC)).